Reading from the N-terminus, the 151-residue chain is Large ribosomal subunit protein uL15 (151 aa).

Positions 1-60 (MAENNPLKIHNLRPAPGAKTAKTRVGRGEASKGKTAGRGTKGTKARYQVPERFEGGQMPL) are disordered.

Belongs to the universal ribosomal protein uL15 family. In terms of assembly, part of the 50S ribosomal subunit.

Its function is as follows. Binds to the 23S rRNA. This chain is Large ribosomal subunit protein uL15, found in Streptomyces coelicolor (strain ATCC BAA-471 / A3(2) / M145).